Reading from the N-terminus, the 249-residue chain is Ubiquinone biosynthesis O-methyltransferase (249 aa).

S-adenosyl-L-methionine is bound by residues R41, G72, D93, and M136.

Belongs to the methyltransferase superfamily. UbiG/COQ3 family.

The enzyme catalyses a 3-demethylubiquinol + S-adenosyl-L-methionine = a ubiquinol + S-adenosyl-L-homocysteine + H(+). It catalyses the reaction a 3-(all-trans-polyprenyl)benzene-1,2-diol + S-adenosyl-L-methionine = a 2-methoxy-6-(all-trans-polyprenyl)phenol + S-adenosyl-L-homocysteine + H(+). The protein operates within cofactor biosynthesis; ubiquinone biosynthesis. O-methyltransferase that catalyzes the 2 O-methylation steps in the ubiquinone biosynthetic pathway. The sequence is that of Ubiquinone biosynthesis O-methyltransferase from Mesorhizobium japonicum (strain LMG 29417 / CECT 9101 / MAFF 303099) (Mesorhizobium loti (strain MAFF 303099)).